The sequence spans 763 residues: ATP-dependent RNA helicase SUPV3L1, mitochondrial (763 aa).

The transit peptide at 1-65 (MSVNRCIYLL…RPLDTSLFIP (65 aa)) directs the protein to the mitochondrion. The tract at residues 39 to 58 (RRTFDKLSTRHSSSGSSRPL) is disordered. The Helicase ATP-binding domain maps to 192-332 (EARAIQRKIV…AVDFITELMF (141 aa)). 205 to 212 (GPTNSGKT) lines the ATP pocket. The Helicase C-terminal domain occupies 354–519 (HAVESLDNLK…PTAEQIEMFA (166 aa)). Disordered stretches follow at residues 679–721 (DSQP…KSSL) and 742–763 (EWAR…RKKK). The span at 680–697 (SQPTDTESNSSSTVPESE) shows a compositional bias: polar residues.

It belongs to the helicase family. Requires Mg(2+) as cofactor. The cofactor is Mn(2+).

Its subcellular location is the nucleus. It is found in the mitochondrion matrix. It localises to the mitochondrion nucleoid. It catalyses the reaction ATP + H2O = ADP + phosphate + H(+). Its function is as follows. Major helicase player in mitochondrial RNA metabolism. Component of the mitochondrial degradosome (mtEXO) complex, that degrades 3' overhang double-stranded RNA with a 3'-to-5' directionality in an ATP-dependent manner. ATPase and ATP-dependent multisubstrate helicase, able to unwind double-stranded (ds) DNA and RNA, and RNA/DNA heteroduplexes in the 5'-to-3' direction. Plays a role in the RNA surveillance system in mitochondria; regulates the stability of mature mRNAs, the removal of aberrantly formed mRNAs and the rapid degradation of non coding processing intermediates. Also implicated in recombination and chromatin maintenance pathways. May protect cells from apoptosis. Associates with mitochondrial DNA. The chain is ATP-dependent RNA helicase SUPV3L1, mitochondrial (supv3l1) from Danio rerio (Zebrafish).